A 101-amino-acid chain; its full sequence is UPF0473 protein str1961 (101 aa).

It belongs to the UPF0473 family.

The chain is UPF0473 protein str1961 from Streptococcus thermophilus (strain CNRZ 1066).